Consider the following 212-residue polypeptide: Negative modulator of initiation of replication (212 aa).

Interaction with DNA regions lie at residues Ala113–Val114 and Arg144–Tyr148.

This sequence belongs to the SeqA family. In terms of assembly, homodimer. Polymerizes to form helical filaments.

The protein resides in the cytoplasm. Functionally, negative regulator of replication initiation, which contributes to regulation of DNA replication and ensures that replication initiation occurs exactly once per chromosome per cell cycle. Binds to pairs of hemimethylated GATC sequences in the oriC region, thus preventing assembly of replication proteins and re-initiation at newly replicated origins. Repression is relieved when the region becomes fully methylated. The protein is Negative modulator of initiation of replication of Actinobacillus succinogenes (strain ATCC 55618 / DSM 22257 / CCUG 43843 / 130Z).